The following is a 288-amino-acid chain: Bifunctional protein FolD (288 aa).

NADP(+)-binding positions include 164 to 166 (GTS) and Ile-230.

The protein belongs to the tetrahydrofolate dehydrogenase/cyclohydrolase family. Homodimer.

It carries out the reaction (6R)-5,10-methylene-5,6,7,8-tetrahydrofolate + NADP(+) = (6R)-5,10-methenyltetrahydrofolate + NADPH. The enzyme catalyses (6R)-5,10-methenyltetrahydrofolate + H2O = (6R)-10-formyltetrahydrofolate + H(+). Its pathway is one-carbon metabolism; tetrahydrofolate interconversion. In terms of biological role, catalyzes the oxidation of 5,10-methylenetetrahydrofolate to 5,10-methenyltetrahydrofolate and then the hydrolysis of 5,10-methenyltetrahydrofolate to 10-formyltetrahydrofolate. This is Bifunctional protein FolD from Mycoplasma mycoides subsp. mycoides SC (strain CCUG 32753 / NCTC 10114 / PG1).